The chain runs to 283 residues: Tetraspanin-33 (283 aa).

The Cytoplasmic segment spans residues 1–24 (MARRPGAPAAYGEDFSFVSPLVKY). The chain crosses the membrane as a helical span at residues 25–45 (LLFFFNMLFWVISMVMVAVGV). Residues 46–64 (YARLMKHEEAALACLAVDP) lie on the Extracellular side of the membrane. A helical membrane pass occupies residues 65–85 (AILLIVVGILMFLLTFCGCIG). Residues 86 to 96 (SLRENICLLQT) lie on the Cytoplasmic side of the membrane. The helical transmembrane segment at 97-117 (FSLCLTVVFLLQLAAGVLGFV) threads the bilayer. At 118–235 (FSDKVRGKVS…DRLVNWIHSN (118 aa)) the chain is on the extracellular side. 4 disulfides stabilise this stretch: C156–C224, C157–C189, C173–C183, and C190–C203. N172 is a glycosylation site (N-linked (GlcNAc...) asparagine). Residues 236 to 256 (LFVLGGVALGLAIPQLVGIML) traverse the membrane as a helical segment. Topologically, residues 257–283 (SMILVSQIKDQIKLQLYNQQHRADPWY) are cytoplasmic.

The protein belongs to the tetraspanin (TM4SF) family. In terms of assembly, homodimer; disulfide-linked. Interacts (via extracellular domain) with ADAM10 (via extracellular domain). Interacts (via cytoplasmic domain) with PLEKHA7 (via WW domains); the interaction is dependent on PDZD11 being bound to PLEKHA7 and facilitates the docking of ADAM10 to zonula adherens.

The protein resides in the cell membrane. The protein localises to the cell junction. Its subcellular location is the adherens junction. It is found in the cytoplasm. Functionally, part of TspanC8 subgroup, composed of 6 members that interact with the transmembrane metalloprotease ADAM10. This interaction is required for ADAM10 exit from the endoplasmic reticulum and for enzymatic maturation and trafficking to the cell surface as well as substrate specificity. Different TspanC8/ADAM10 complexes have distinct substrates. Plays an important role in normal erythropoiesis. It has a role in the differentiation of erythroid progenitors. Negatively regulates ligand-induced Notch activity probably by regulating ADAM10 activity. Mediates docking of ADAM10 to zonula adherens by interacting with ADAM10 and, in a PDZD11-dependent manner, with the zonula adherens protein PLEKHA7. This Bos taurus (Bovine) protein is Tetraspanin-33 (TSPAN33).